The following is a 337-amino-acid chain: Glyceraldehyde-3-phosphate dehydrogenase 1 (337 aa).

Residues 12–13 (RI), D34, and M79 contribute to the NAD(+) site. Residues 151 to 153 (SCT), T182, 211 to 212 (TG), and R234 contribute to the D-glyceraldehyde 3-phosphate site. Catalysis depends on C152, which acts as the Nucleophile. N316 is an NAD(+) binding site.

It belongs to the glyceraldehyde-3-phosphate dehydrogenase family. In terms of assembly, homotetramer.

The protein resides in the cytoplasm. It carries out the reaction D-glyceraldehyde 3-phosphate + phosphate + NAD(+) = (2R)-3-phospho-glyceroyl phosphate + NADH + H(+). It participates in carbohydrate degradation; glycolysis; pyruvate from D-glyceraldehyde 3-phosphate: step 1/5. This chain is Glyceraldehyde-3-phosphate dehydrogenase 1 (GAP1), found in Giardia intestinalis (Giardia lamblia).